We begin with the raw amino-acid sequence, 214 residues long: Probable transaldolase 1 (214 aa).

The active-site Schiff-base intermediate with substrate is Lys-83.

It belongs to the transaldolase family. Type 3B subfamily.

It localises to the cytoplasm. The catalysed reaction is D-sedoheptulose 7-phosphate + D-glyceraldehyde 3-phosphate = D-erythrose 4-phosphate + beta-D-fructose 6-phosphate. It functions in the pathway carbohydrate degradation; pentose phosphate pathway; D-glyceraldehyde 3-phosphate and beta-D-fructose 6-phosphate from D-ribose 5-phosphate and D-xylulose 5-phosphate (non-oxidative stage): step 2/3. Functionally, transaldolase is important for the balance of metabolites in the pentose-phosphate pathway. The sequence is that of Probable transaldolase 1 from Listeria monocytogenes serotype 4b (strain F2365).